Consider the following 209-residue polypeptide: Imidazole glycerol phosphate synthase subunit HisH (209 aa).

The Glutamine amidotransferase type-1 domain occupies 3–209 (KIGLIDYGMG…WINWLKKNKF (207 aa)). Cys81 functions as the Nucleophile in the catalytic mechanism. Active-site residues include His185 and Glu187.

As to quaternary structure, heterodimer of HisH and HisF.

The protein resides in the cytoplasm. It catalyses the reaction 5-[(5-phospho-1-deoxy-D-ribulos-1-ylimino)methylamino]-1-(5-phospho-beta-D-ribosyl)imidazole-4-carboxamide + L-glutamine = D-erythro-1-(imidazol-4-yl)glycerol 3-phosphate + 5-amino-1-(5-phospho-beta-D-ribosyl)imidazole-4-carboxamide + L-glutamate + H(+). The catalysed reaction is L-glutamine + H2O = L-glutamate + NH4(+). Its pathway is amino-acid biosynthesis; L-histidine biosynthesis; L-histidine from 5-phospho-alpha-D-ribose 1-diphosphate: step 5/9. Functionally, IGPS catalyzes the conversion of PRFAR and glutamine to IGP, AICAR and glutamate. The HisH subunit catalyzes the hydrolysis of glutamine to glutamate and ammonia as part of the synthesis of IGP and AICAR. The resulting ammonia molecule is channeled to the active site of HisF. The sequence is that of Imidazole glycerol phosphate synthase subunit HisH from Prochlorococcus marinus (strain NATL2A).